Here is a 94-residue protein sequence, read N- to C-terminus: Integration host factor subunit beta (94 aa).

Belongs to the bacterial histone-like protein family. In terms of assembly, heterodimer of an alpha and a beta chain.

Its function is as follows. This protein is one of the two subunits of integration host factor, a specific DNA-binding protein that functions in genetic recombination as well as in transcriptional and translational control. In Haemophilus influenzae (strain 86-028NP), this protein is Integration host factor subunit beta.